A 726-amino-acid polypeptide reads, in one-letter code: L-lysine 6-oxidase (726 aa).

Residues 516 to 581 (CTIQTVNFSE…LPPAYYSYWW (66 aa)) constitute a cross-link (4'-cysteinyl-tryptophylquinone (Cys-Trp)). A Tryptophylquinone modification is found at Trp581.

In terms of assembly, homotetramer. It depends on cysteine tryptophylquinone residue as a cofactor. The cysteine tryptophylquinone (CTQ) is generated by oxidation of the indole ring of a tryptophan residue to form tryptophylquinone, followed by covalent cross-linking with a cysteine residue.

The protein resides in the secreted. The enzyme catalyses L-lysine + O2 + H2O = (S)-2-amino-6-oxohexanoate + H2O2 + NH4(+). With respect to regulation, inhibited by aminoguanidine, amiloride and beta-aminopropionitrile. Has antibacterial activity against a wide spectrum of Gram-positive and Gram-negative bacteria including nosocomial isolates of S.aureus and Pseudomonas sp. The antimicrobial activity is due to hydrogen peroxide generated by its lysine oxidase activity. Also has autotoxic activity. Involved in biofilm differentiation; responsible for cell death within microcolonies during biofilm development which is linked to the generation of a phenotypically diverse dispersal population and thus may play a role in colonization. This chain is L-lysine 6-oxidase (lodA), found in Marinomonas mediterranea (strain ATCC 700492 / JCM 21426 / NBRC 103028 / MMB-1).